The chain runs to 515 residues: Histidine ammonia-lyase (515 aa).

Residues 145 to 147 (ASG) constitute a cross-link (5-imidazolinone (Ala-Gly)). The residue at position 146 (S146) is a 2,3-didehydroalanine (Ser).

The protein belongs to the PAL/histidase family. In terms of processing, contains an active site 4-methylidene-imidazol-5-one (MIO), which is formed autocatalytically by cyclization and dehydration of residues Ala-Ser-Gly.

It localises to the cytoplasm. The enzyme catalyses L-histidine = trans-urocanate + NH4(+). The protein operates within amino-acid degradation; L-histidine degradation into L-glutamate; N-formimidoyl-L-glutamate from L-histidine: step 1/3. The chain is Histidine ammonia-lyase from Gluconobacter oxydans (strain 621H) (Gluconobacter suboxydans).